Consider the following 69-residue polypeptide: DNA-directed RNA polymerase subunit epsilon (69 aa).

The protein belongs to the RNA polymerase subunit epsilon family. In terms of assembly, RNAP is composed of a core of 2 alpha, a beta and a beta' subunit. The core is associated with a delta subunit, and at least one of epsilon or omega. When a sigma factor is associated with the core the holoenzyme is formed, which can initiate transcription.

It catalyses the reaction RNA(n) + a ribonucleoside 5'-triphosphate = RNA(n+1) + diphosphate. In terms of biological role, a non-essential component of RNA polymerase (RNAP). The chain is DNA-directed RNA polymerase subunit epsilon from Listeria welshimeri serovar 6b (strain ATCC 35897 / DSM 20650 / CCUG 15529 / CIP 8149 / NCTC 11857 / SLCC 5334 / V8).